The sequence spans 87 residues: uncharacterized protein (87 aa).

To bacteriophage lambda exonuclease exo.

This is an uncharacterized protein from Escherichia coli (strain K12).